Here is a 127-residue protein sequence, read N- to C-terminus: Large ribosomal subunit protein bL12 (127 aa).

It belongs to the bacterial ribosomal protein bL12 family. As to quaternary structure, homodimer. Part of the ribosomal stalk of the 50S ribosomal subunit. Forms a multimeric L10(L12)X complex, where L10 forms an elongated spine to which 2 to 4 L12 dimers bind in a sequential fashion. Binds GTP-bound translation factors.

Functionally, forms part of the ribosomal stalk which helps the ribosome interact with GTP-bound translation factors. Is thus essential for accurate translation. In Syntrophobacter fumaroxidans (strain DSM 10017 / MPOB), this protein is Large ribosomal subunit protein bL12.